The primary structure comprises 441 residues: Cortexillin-2 (441 aa).

An actin-binding region spans residues 1–229; the sequence is MDLNKEWEKV…VLYTSLFFHA (229 aa). Calponin-homology (CH) domains lie at 9-117 and 126-231; these read KVQE…RKYR and KSSE…HAFR. Coiled coils occupy residues 229–362 and 406–430; these read AFRA…RLGL and SFEE…KYLN.

The protein belongs to the cortexillin family. In terms of assembly, homodimer; parallel.

The protein resides in the cytoplasm. Its subcellular location is the cytoskeleton. Actin-bundling protein. When linked to F-actin the actin filaments form preferentially anti-parallel bundles that associate into meshworks. Plays a major role in cytokinesis. Negatively regulates cortical localization of rapgap1. This is Cortexillin-2 (ctxB) from Dictyostelium discoideum (Social amoeba).